A 99-amino-acid polypeptide reads, in one-letter code: Integration host factor subunit alpha (99 aa).

The protein belongs to the bacterial histone-like protein family. In terms of assembly, heterodimer of an alpha and a beta chain.

Its function is as follows. This protein is one of the two subunits of integration host factor, a specific DNA-binding protein that functions in genetic recombination as well as in transcriptional and translational control. The polypeptide is Integration host factor subunit alpha (Enterobacter sp. (strain 638)).